Reading from the N-terminus, the 144-residue chain is Protein SprT-like (144 aa).

Residues 4–143 (NKYVQEVSLQ…GKCRGKLTLK (140 aa)) form the SprT-like domain. A Zn(2+)-binding site is contributed by His-64. Glu-65 is an active-site residue. His-68 lines the Zn(2+) pocket.

The protein belongs to the SprT family. Zn(2+) serves as cofactor.

The protein resides in the cytoplasm. The sequence is that of Protein SprT-like from Streptococcus suis (strain 98HAH33).